The chain runs to 420 residues: Threonine aspartase 1 (420 aa).

The interval 1–25 (MIMEKGMNSGEGLPSRSSQASAAKV) is disordered. The Nucleophile role is filled by threonine 234.

The protein belongs to the Ntn-hydrolase family. As to quaternary structure, intramolecular proteolysis generates 2 subunits, alpha and beta, which reassemble through a non-covalent association to form the fully active enzyme.

Its function is as follows. Protease responsible for KMT2A/MLL1 and KMT2D/MLL2 processing and activation. Through substrate activation, it controls the expression of HOXA genes, and the expression of key cell cycle regulators including CCNA1, CCNB1, CCNE1 and CDKN2A. This Mus musculus (Mouse) protein is Threonine aspartase 1 (Tasp1).